Reading from the N-terminus, the 143-residue chain is MFMGEYQHNLDAKGRLIIPAKLREQIGPAMVLTRGMEGCIFGYPLTEWAKIEAKLAKLPLTKKNARSFTRMFYSGAMEGEFDKQGRINLSPTLKKHAGLVKECVIVGVSNRIEIWAKERWEEYSDEANESYDEIAEDLDDIEL.

SpoVT-AbrB domains lie at 5–47 (EYQH…PLTE) and 76–119 (AMEG…AKER).

This sequence belongs to the MraZ family. In terms of assembly, forms oligomers.

The protein localises to the cytoplasm. It is found in the nucleoid. This chain is Transcriptional regulator MraZ, found in Lactobacillus delbrueckii subsp. bulgaricus (strain ATCC 11842 / DSM 20081 / BCRC 10696 / JCM 1002 / NBRC 13953 / NCIMB 11778 / NCTC 12712 / WDCM 00102 / Lb 14).